Here is a 96-residue protein sequence, read N- to C-terminus: Co-chaperonin GroES (96 aa).

This sequence belongs to the GroES chaperonin family. Heptamer of 7 subunits arranged in a ring. Interacts with the chaperonin GroEL.

The protein localises to the cytoplasm. Its function is as follows. Together with the chaperonin GroEL, plays an essential role in assisting protein folding. The GroEL-GroES system forms a nano-cage that allows encapsulation of the non-native substrate proteins and provides a physical environment optimized to promote and accelerate protein folding. GroES binds to the apical surface of the GroEL ring, thereby capping the opening of the GroEL channel. This Thiobacillus denitrificans (strain ATCC 25259 / T1) protein is Co-chaperonin GroES.